A 904-amino-acid polypeptide reads, in one-letter code: E3 ubiquitin-protein ligase HACE1 (904 aa).

7 ANK repeats span residues 34 to 63 (AVYT…DVNY), 68 to 97 (VKRS…NPNY), 101 to 130 (SGCT…DVNI), 134 to 163 (EGLT…NVDV), 167 to 196 (MGQT…DINR), 200 to 230 (SGAT…YLPD), and 232 to 261 (NGVT…RLFQ). In terms of domain architecture, HECT spans 569-904 (SNEKLKQGIA…HCGSYGYTMA (336 aa)). The active-site Glycyl thioester intermediate is the cysteine 871.

The protein localises to the golgi apparatus. The protein resides in the golgi stack membrane. It localises to the cytoplasm. It is found in the endoplasmic reticulum. It catalyses the reaction S-ubiquitinyl-[E2 ubiquitin-conjugating enzyme]-L-cysteine + [acceptor protein]-L-lysine = [E2 ubiquitin-conjugating enzyme]-L-cysteine + N(6)-ubiquitinyl-[acceptor protein]-L-lysine.. Its pathway is protein modification; protein ubiquitination. In terms of biological role, E3 ubiquitin-protein ligase involved in Golgi membrane fusion and regulation of small GTPases. Acts as a regulator of Golgi membrane dynamics during the cell cycle: recruited to Golgi membrane by Rab proteins and regulates postmitotic Golgi membrane fusion. Acts by mediating ubiquitination during mitotic Golgi disassembly, ubiquitination serving as a signal for Golgi reassembly later, after cell division. This is E3 ubiquitin-protein ligase HACE1 (hace1) from Danio rerio (Zebrafish).